We begin with the raw amino-acid sequence, 221 residues long: Chalcone--flavanone isomerase (221 aa).

Positions 47, 112, and 189 each coordinate substrate.

Belongs to the chalcone isomerase family.

The catalysed reaction is a chalcone = a flavanone.. Its pathway is secondary metabolite biosynthesis; flavonoid biosynthesis. Functionally, catalyzes the intramolecular cyclization of bicyclic chalcones into tricyclic (S)-flavanones. Responsible for the isomerization of 4,2',4',6'-tetrahydroxychalcone (also termed chalcone) into naringenin. The polypeptide is Chalcone--flavanone isomerase (CHI) (Dianthus caryophyllus (Carnation)).